We begin with the raw amino-acid sequence, 95 residues long: Co-chaperonin GroES (95 aa).

Belongs to the GroES chaperonin family. Heptamer of 7 subunits arranged in a ring. Interacts with the chaperonin GroEL.

It is found in the cytoplasm. Together with the chaperonin GroEL, plays an essential role in assisting protein folding. The GroEL-GroES system forms a nano-cage that allows encapsulation of the non-native substrate proteins and provides a physical environment optimized to promote and accelerate protein folding. GroES binds to the apical surface of the GroEL ring, thereby capping the opening of the GroEL channel. The protein is Co-chaperonin GroES of Novosphingobium aromaticivorans (strain ATCC 700278 / DSM 12444 / CCUG 56034 / CIP 105152 / NBRC 16084 / F199).